Consider the following 95-residue polypeptide: uncharacterized protein (95 aa).

The disordered stretch occupies residues 1–64 (MEIDDIFASK…PKGASGRKRT (64 aa)). Residues 18-28 (KSNDSKSEAKA) show a composition bias toward basic and acidic residues. Residues 35-49 (TKSTPSRPKPTNNQD) are compositionally biased toward polar residues.

This is an uncharacterized protein from Schizosaccharomyces pombe (strain 972 / ATCC 24843) (Fission yeast).